Reading from the N-terminus, the 118-residue chain is Large ribosomal subunit protein bL20 (118 aa).

The protein belongs to the bacterial ribosomal protein bL20 family.

In terms of biological role, binds directly to 23S ribosomal RNA and is necessary for the in vitro assembly process of the 50S ribosomal subunit. It is not involved in the protein synthesizing functions of that subunit. The sequence is that of Large ribosomal subunit protein bL20 from Agathobacter rectalis (strain ATCC 33656 / DSM 3377 / JCM 17463 / KCTC 5835 / VPI 0990) (Eubacterium rectale).